Here is a 267-residue protein sequence, read N- to C-terminus: Large ribosomal subunit protein uL3 (267 aa).

Residues 124 to 147 are disordered; that stretch reads NQHIGPKSHGGGGGSQPVRQTGSL.

Belongs to the universal ribosomal protein uL3 family. Part of the 50S ribosomal subunit. Forms a cluster with proteins L14 and L19.

Its function is as follows. One of the primary rRNA binding proteins, it binds directly near the 3'-end of the 23S rRNA, where it nucleates assembly of the 50S subunit. The chain is Large ribosomal subunit protein uL3 from Mycoplasmopsis agalactiae (strain NCTC 10123 / CIP 59.7 / PG2) (Mycoplasma agalactiae).